Reading from the N-terminus, the 152-residue chain is Nucleoside diphosphate kinase A (152 aa).

ATP is bound by residues Lys-12, Phe-60, Arg-88, and Thr-94. Lys-100 is covalently cross-linked (Glycyl lysine isopeptide (Lys-Gly) (interchain with G-Cter in ubiquitin)). ATP-binding residues include Arg-105 and Asn-115. His-118 functions as the Pros-phosphohistidine intermediate in the catalytic mechanism. Phosphoserine is present on residues Ser-120, Ser-122, and Ser-125.

The protein belongs to the NDK family. Hexamer of two different chains: An and B (A6, A5B, A4B2, A3B3, A2B4, AB5, B6). Interacts with PRUNE1. Component of the SET complex, composed of at least ANP32A, APEX1, HMGB2, NME1, SET and TREX1. Within this complex, interacts directly with SET. Also interacts with TREX1, but only following translocation to the nucleus. It depends on Mg(2+) as a cofactor.

It is found in the cytoplasm. It localises to the nucleus. It carries out the reaction a 2'-deoxyribonucleoside 5'-diphosphate + ATP = a 2'-deoxyribonucleoside 5'-triphosphate + ADP. The enzyme catalyses a ribonucleoside 5'-diphosphate + ATP = a ribonucleoside 5'-triphosphate + ADP. Its activity is regulated as follows. Autophosphorylation at His-118 increases serine/threonine protein kinase activity of the enzyme. Interaction with the SET complex inhibits exonuclease activity. In terms of biological role, major role in the synthesis of nucleoside triphosphates other than ATP. The ATP gamma phosphate is transferred to the NDP beta phosphate via a ping-pong mechanism, using a phosphorylated active-site intermediate. Possesses nucleoside-diphosphate kinase, serine/threonine-specific protein kinase, geranyl and farnesyl pyrophosphate kinase, histidine protein kinase and 3'-5' exonuclease activities. Involved in cell proliferation, differentiation and development, signal transduction, G protein-coupled receptor endocytosis, and gene expression. Required for neural development including neural patterning and cell fate determination. During GZMA-mediated cell death, works in concert with TREX1. NME1 nicks one strand of DNA and TREX1 removes bases from the free 3' end to enhance DNA damage and prevent DNA end reannealing and rapid repair. The chain is Nucleoside diphosphate kinase A (NME1) from Canis lupus familiaris (Dog).